Here is a 754-residue protein sequence, read N- to C-terminus: 5-methyltetrahydropteroyltriglutamate--homocysteine methyltransferase (754 aa).

Residues 17–20 and Lys117 each bind 5-methyltetrahydropteroyltri-L-glutamate; that span reads RELK. L-homocysteine is bound by residues 431-433 and Glu484; that span reads IGS. Residues 431 to 433 and Glu484 each bind L-methionine; that span reads IGS. 5-methyltetrahydropteroyltri-L-glutamate is bound by residues 515-516 and Trp561; that span reads RC. Residue Asp599 coordinates L-homocysteine. Position 599 (Asp599) interacts with L-methionine. Glu605 serves as a coordination point for 5-methyltetrahydropteroyltri-L-glutamate. Residues His641, Cys643, and Glu665 each coordinate Zn(2+). His694 (proton donor) is an active-site residue. A Zn(2+)-binding site is contributed by Cys726.

This sequence belongs to the vitamin-B12 independent methionine synthase family. Requires Zn(2+) as cofactor.

The catalysed reaction is 5-methyltetrahydropteroyltri-L-glutamate + L-homocysteine = tetrahydropteroyltri-L-glutamate + L-methionine. Its pathway is amino-acid biosynthesis; L-methionine biosynthesis via de novo pathway; L-methionine from L-homocysteine (MetE route): step 1/1. In terms of biological role, catalyzes the transfer of a methyl group from 5-methyltetrahydrofolate to homocysteine resulting in methionine formation. The protein is 5-methyltetrahydropteroyltriglutamate--homocysteine methyltransferase of Salmonella agona (strain SL483).